Reading from the N-terminus, the 650-residue chain is Acetyl-coenzyme A synthetase (650 aa).

CoA-binding positions include 191–194 (RGGR), Thr-311, and Asn-335. Residues 387 to 389 (GEP), 411 to 416 (DTWWQT), Asp-500, and Arg-515 contribute to the ATP site. Ser-523 serves as a coordination point for CoA. Residue Arg-526 participates in ATP binding. Residues Val-537, His-539, and Val-542 each contribute to the Mg(2+) site. Position 584 (Arg-584) interacts with CoA. Lys-609 is modified (N6-acetyllysine).

The protein belongs to the ATP-dependent AMP-binding enzyme family. The cofactor is Mg(2+). Post-translationally, acetylated. Deacetylation by the SIR2-homolog deacetylase activates the enzyme.

The catalysed reaction is acetate + ATP + CoA = acetyl-CoA + AMP + diphosphate. In terms of biological role, catalyzes the conversion of acetate into acetyl-CoA (AcCoA), an essential intermediate at the junction of anabolic and catabolic pathways. AcsA undergoes a two-step reaction. In the first half reaction, AcsA combines acetate with ATP to form acetyl-adenylate (AcAMP) intermediate. In the second half reaction, it can then transfer the acetyl group from AcAMP to the sulfhydryl group of CoA, forming the product AcCoA. This Shewanella sp. (strain W3-18-1) protein is Acetyl-coenzyme A synthetase.